The chain runs to 394 residues: Uroporphyrinogen decarboxylase 2, chloroplastic (394 aa).

Residues 74 to 78, Phe-93, Ser-123, Asp-124, Tyr-201, Ser-256, and His-371 each bind substrate; that span reads RQAGR.

Belongs to the uroporphyrinogen decarboxylase family. In terms of assembly, homodimer.

Its subcellular location is the plastid. The protein localises to the chloroplast. The catalysed reaction is uroporphyrinogen III + 4 H(+) = coproporphyrinogen III + 4 CO2. It participates in porphyrin-containing compound metabolism; protoporphyrin-IX biosynthesis; coproporphyrinogen-III from 5-aminolevulinate: step 4/4. The protein operates within porphyrin-containing compound metabolism; chlorophyll biosynthesis. In terms of biological role, catalyzes the decarboxylation of four acetate groups of uroporphyrinogen-III to yield coproporphyrinogen-III. The sequence is that of Uroporphyrinogen decarboxylase 2, chloroplastic (HEME2) from Arabidopsis thaliana (Mouse-ear cress).